A 295-amino-acid polypeptide reads, in one-letter code: GTPase Era (295 aa).

The region spanning 5–172 is the Era-type G domain; it reads YCGYAAIIGR…EQAVHQLMPE (168 aa). Residues 13-20 are G1; that stretch reads GRPNVGKS. 13–20 provides a ligand contact to GTP; that stretch reads GRPNVGKS. The interval 39–43 is G2; it reads QTTRY. Residues 60 to 63 are G3; sequence DTPG. GTP contacts are provided by residues 60–64 and 121–124; these read DTPGL and NKVD. A G4 region spans residues 121–124; it reads NKVD. The G5 stretch occupies residues 151–153; it reads LSA. Positions 203 to 279 constitute a KH type-2 domain; sequence LGQEIPYSLA…FLQLWVKVKS (77 aa).

Belongs to the TRAFAC class TrmE-Era-EngA-EngB-Septin-like GTPase superfamily. Era GTPase family. Monomer.

Its subcellular location is the cytoplasm. It localises to the cell inner membrane. In terms of biological role, an essential GTPase that binds both GDP and GTP, with rapid nucleotide exchange. Plays a role in 16S rRNA processing and 30S ribosomal subunit biogenesis and possibly also in cell cycle regulation and energy metabolism. This is GTPase Era from Coxiella burnetii (strain RSA 331 / Henzerling II).